A 430-amino-acid chain; its full sequence is Glutamyl-tRNA reductase 1 (430 aa).

Substrate is bound by residues 49-52 (TCNR), Ser-109, 114-116 (EGQ), and Gln-120. Cys-50 functions as the Nucleophile in the catalytic mechanism. Residue 189–194 (GAGSMA) participates in NADP(+) binding.

This sequence belongs to the glutamyl-tRNA reductase family. In terms of assembly, homodimer.

The catalysed reaction is (S)-4-amino-5-oxopentanoate + tRNA(Glu) + NADP(+) = L-glutamyl-tRNA(Glu) + NADPH + H(+). It functions in the pathway porphyrin-containing compound metabolism; protoporphyrin-IX biosynthesis; 5-aminolevulinate from L-glutamyl-tRNA(Glu): step 1/2. In terms of biological role, catalyzes the NADPH-dependent reduction of glutamyl-tRNA(Glu) to glutamate 1-semialdehyde (GSA). The protein is Glutamyl-tRNA reductase 1 of Nocardioides sp. (strain ATCC BAA-499 / JS614).